The sequence spans 401 residues: L-rhamnonate dehydratase (401 aa).

Residues H29 and R55 each coordinate substrate. Residues D222, E248, and E276 each coordinate Mg(2+). Catalysis depends on H325, which acts as the Proton acceptor. E345 provides a ligand contact to substrate.

The protein belongs to the mandelate racemase/muconate lactonizing enzyme family. RhamD subfamily. As to quaternary structure, homooctamer; tetramer of dimers. The cofactor is Mg(2+).

The enzyme catalyses L-rhamnonate = 2-dehydro-3-deoxy-L-rhamnonate + H2O. Functionally, catalyzes the dehydration of L-rhamnonate to 2-keto-3-deoxy-L-rhamnonate (KDR). This Tolumonas auensis (strain DSM 9187 / NBRC 110442 / TA 4) protein is L-rhamnonate dehydratase.